Here is a 552-residue protein sequence, read N- to C-terminus: FACT complex subunit POB3 (552 aa).

Residues 190–205 are compositionally biased toward basic and acidic residues; sequence KKEESSNEVVPKKEDG. Disordered stretches follow at residues 190-209 and 484-552; these read KKEESSNEVVPKKEDGAEGE and QTAL…PKVE. Acidic residues predominate over residues 490 to 529; that stretch reads DSDEEDINMGSAGEDDESVDEDFQVSSDNDADEVAEEFDS. Basic and acidic residues predominate over residues 541 to 552; that stretch reads DEERPSKKPKVE.

Belongs to the SSRP1 family. Forms a stable heterodimer with SPT16. The SPT16-POB3 dimer weakly associates with multiple molecules of NHP6 (NHP6A or NHP6B) to form the FACT (yFACT or SNP) complex. The FACT complex interacts with the CK2 (casein kinase II) complex subunits CKA1, CKA2, CKB1 and CKB2 and the components of the transcription machinery CHD1, CTR9, PAF1 and CDC73. The FACT complex interacts with the PAF1 complex. SPT16 interacts with SAS3 and POL1. Interacts directly with RFA1.

It localises to the nucleus. Its subcellular location is the chromosome. Functionally, component of the FACT complex, a general chromatin factor that acts to reorganize nucleosomes. The FACT complex is involved in multiple processes that require DNA as a template such as mRNA elongation, DNA replication and DNA repair. During transcription elongation the FACT complex acts as a histone chaperone that both destabilizes and restores nucleosomal structure. It facilitates the passage of RNA polymerase II and transcription by promoting the dissociation of one histone H2A-H2B dimer from the nucleosome, then subsequently promotes the reestablishment of the nucleosome following the passage of RNA polymerase II. Transcription elongation is promoted by the repression of transcription initiation from cryptic sites. Also acts in establishing transcription initiation complexes and promotes SPT15/TBP-binding to a TATA box. Together with replication factor-A protein (RPA), FACT may play a role in nucleosome deposition during DNA replication. This is FACT complex subunit POB3 (POB3) from Saccharomyces cerevisiae (strain ATCC 204508 / S288c) (Baker's yeast).